A 189-amino-acid chain; its full sequence is Putative manganese efflux pump MntP (189 aa).

Helical transmembrane passes span 3–23, 41–61, 65–85, 103–123, 132–152, and 167–187; these read LSAT…ASIG, LIFG…GLFA, IMEW…MRMI, GFWL…AIGV, IVHT…LGMM, and ILGG…HLGY.

Belongs to the MntP (TC 9.B.29) family.

Its subcellular location is the cell inner membrane. Its function is as follows. Probably functions as a manganese efflux pump. In Serratia proteamaculans (strain 568), this protein is Putative manganese efflux pump MntP.